A 534-amino-acid chain; its full sequence is Phenylalanine N-monooxygenase CYP79D16 (534 aa).

Residues Met1–Met21 form the signal peptide. Cys472 is a heme binding site. An N-linked (GlcNAc...) asparagine glycan is attached at Asn500.

Belongs to the cytochrome P450 family. Requires heme as cofactor. Expressed in seedlings.

The enzyme catalyses L-phenylalanine + 2 reduced [NADPH--hemoprotein reductase] + 2 O2 = (E)-phenylacetaldehyde oxime + 2 oxidized [NADPH--hemoprotein reductase] + CO2 + 3 H2O + 2 H(+). In terms of biological role, involved in L-phenylalanine-derived cyanogenic glycoside biosynthesis, including prunasin and amygdalin defensive agents. Catalyzes the conversion of L-phenylalanine (Phe) into phenylacetaldoxime (PAOx). Cannot use tyrosine (Tyr), tryptophan (Trp) and valine (Val) as substrates. This Prunus mume (Japanese apricot) protein is Phenylalanine N-monooxygenase CYP79D16.